Consider the following 306-residue polypeptide: UDP-3-O-acyl-N-acetylglucosamine deacetylase (306 aa).

Zn(2+) is bound by residues histidine 79, histidine 238, and aspartate 242. Histidine 265 (proton donor) is an active-site residue.

Belongs to the LpxC family. Zn(2+) is required as a cofactor.

The enzyme catalyses a UDP-3-O-[(3R)-3-hydroxyacyl]-N-acetyl-alpha-D-glucosamine + H2O = a UDP-3-O-[(3R)-3-hydroxyacyl]-alpha-D-glucosamine + acetate. The protein operates within glycolipid biosynthesis; lipid IV(A) biosynthesis; lipid IV(A) from (3R)-3-hydroxytetradecanoyl-[acyl-carrier-protein] and UDP-N-acetyl-alpha-D-glucosamine: step 2/6. Functionally, catalyzes the hydrolysis of UDP-3-O-myristoyl-N-acetylglucosamine to form UDP-3-O-myristoylglucosamine and acetate, the committed step in lipid A biosynthesis. The chain is UDP-3-O-acyl-N-acetylglucosamine deacetylase from Shewanella loihica (strain ATCC BAA-1088 / PV-4).